Here is a 245-residue protein sequence, read N- to C-terminus: Inner membrane protein YgaZ (245 aa).

Residues 1 to 24 (MESPTPQPAPGSATFMEGCKDSLP) lie on the Cytoplasmic side of the membrane. Residues 25–45 (IVISYIPVAFAFGLNATRLGF) form a helical membrane-spanning segment. Over 46-63 (SPLESVFFSCIIYAGASQ) the chain is Periplasmic. A helical membrane pass occupies residues 64–84 (FVITAMLAAGSSLWIAALTVM). Residues 85–109 (AMDVRHVLYGPSLRSRIIQRLQKSK) lie on the Cytoplasmic side of the membrane. Residues 110 to 130 (TALWAFGLTDEVFAAATAKLV) traverse the membrane as a helical segment. Residues 131–140 (RNNRRWSENW) are Periplasmic-facing. A helical transmembrane segment spans residues 141 to 161 (MIGIAFSSWSSWVFGTVIGAF). Topologically, residues 162-172 (SGSGLLQGYPA) are cytoplasmic. Residues 173-193 (VEAALGFMLPALFMSFLLASF) form a helical membrane-spanning segment. Over 194–205 (QRKQSLCVTAAL) the chain is Periplasmic. The helical transmembrane segment at 206–226 (VGALAGVTLFSIPVAILAGIV) threads the bilayer. Residues 227–245 (CGCLTALIQAFWQGAPDEL) lie on the Cytoplasmic side of the membrane.

It belongs to the AzlC family.

It is found in the cell inner membrane. This chain is Inner membrane protein YgaZ (ygaZ), found in Escherichia coli (strain K12).